The chain runs to 259 residues: DnaJ homolog subfamily C member 9 (259 aa).

A J domain is found at 15-82 (DLYQVLGVRR…EQKAVYDEQG (68 aa)). Residue S109 is modified to Phosphoserine. The tract at residues 171–248 (EIPAYSAFVK…EAKYCKPSKG (78 aa)) is required for histone binding.

In terms of assembly, forms a co-chaperone complex with MCM2 and histone H3.3-H4 dimers. Within the complex, interacts (via C-terminus) with MCM2 (via N-terminus); the interaction is histone-dependent. Within the complex, interacts (via C-terminus) with histone H3.3-H4 heterodimers; the interaction is direct. Interacts with histones H4, H3.3, H3.2 and H3.1, but not with CENPA or the testis-specific histone H3.1t. Interacts (via J domain) with HSPA1A, HSPA1B and HSPA8. May interact with TONSL; the interaction seems to be histone-dependent. May interact with HSPA8 and BAG2; the interactions seem to be histone-dependent.

Its subcellular location is the nucleus. The protein localises to the cytoplasm. It is found in the cell membrane. Acts as a dual histone chaperone and heat shock co-chaperone. As a histone chaperone, forms a co-chaperone complex with MCM2 and histone H3-H4 heterodimers; and may thereby assist MCM2 in histone H3-H4 heterodimer recognition and facilitate the assembly of histones into nucleosomes. May also act as a histone co-chaperone together with TONSL. May recruit histone chaperones ASF1A, NASP and SPT2 to histone H3-H4 heterodimers. Also plays a role as co-chaperone of the HSP70 family of molecular chaperone proteins, such as HSPA1A, HSPA1B and HSPA8. As a co-chaperone, may play a role in the recruitment of HSP70-type molecular chaperone machinery to histone H3-H4 substrates, thereby maintaining the histone structural integrity. Exhibits activity to assemble histones onto DNA in vitro. This chain is DnaJ homolog subfamily C member 9 (Dnajc9), found in Mus musculus (Mouse).